The sequence spans 418 residues: Mitochondrial outer membrane protein SLC25A46 (418 aa).

2 positions are modified to phosphoserine: serine 32 and serine 35. Residue threonine 45 is modified to Phosphothreonine. Residues 46–96 form a disordered region; sequence PPDIPGSRNLHWGEKSPSYGVPSAPPTLEGSAEEPFPGGGEGPRPGPSSEQ. Residues 96 to 187 form a Solcar 1 repeat; sequence QLNRFAGFGI…GIISEFTPLP (92 aa). Transmembrane regions (helical) follow at residues 103–123, 167–187, 202–222, 258–278, 314–334, and 382–402; these read FGIG…CIVL, FIVQ…TPLP, HLLL…ASLI, LLPL…HYII, FPEL…LYPL, and VFGF…HATI. A Solcar 2 repeat occupies 311–413; that stretch reads DAYFPELIAN…QITKMIYSTL (103 aa).

It belongs to the mitochondrial carrier (TC 2.A.29) family. In terms of assembly, associates with the mitochondrial contact site and cristae organizing system (MICOS) complex. May associate with the endoplasmic reticulum membrane protein complex (EMC).

It is found in the mitochondrion outer membrane. Functionally, transmembrane protein of the mitochondrial outer membrane that controls mitochondrial organization. May regulate the assembly of the MICOS (mitochondrial contact site and cristae organizing system) complex which is essential to the biogenesis and dynamics of mitochondrial cristae, the inwards folds of the inner mitochondrial membrane. Through its interaction with the EMC (endoplasmic reticulum membrane protein complex), could regulate mitochondrial lipid homeostasis and thereby mitochondrial fission. The polypeptide is Mitochondrial outer membrane protein SLC25A46 (Mus musculus (Mouse)).